Consider the following 452-residue polypeptide: Bifunctional protein GlmU (452 aa).

The tract at residues methionine 1 to lysine 232 is pyrophosphorylase. Residues leucine 11–glycine 14, lysine 25, glutamine 78, and glycine 83–threonine 84 contribute to the UDP-N-acetyl-alpha-D-glucosamine site. Residue aspartate 108 coordinates Mg(2+). Glycine 144, glutamate 158, asparagine 173, and asparagine 230 together coordinate UDP-N-acetyl-alpha-D-glucosamine. A Mg(2+)-binding site is contributed by asparagine 230. The linker stretch occupies residues alanine 233–alanine 253. Residues glycine 254–lysine 452 are N-acetyltransferase. The UDP-N-acetyl-alpha-D-glucosamine site is built by arginine 319 and lysine 337. Catalysis depends on histidine 349, which acts as the Proton acceptor. UDP-N-acetyl-alpha-D-glucosamine contacts are provided by tyrosine 352 and asparagine 363. Residues alanine 366, asparagine 372–tyrosine 373, serine 391, serine 409, and arginine 426 each bind acetyl-CoA.

This sequence in the N-terminal section; belongs to the N-acetylglucosamine-1-phosphate uridyltransferase family. In the C-terminal section; belongs to the transferase hexapeptide repeat family. In terms of assembly, homotrimer. It depends on Mg(2+) as a cofactor.

The protein localises to the cytoplasm. It catalyses the reaction alpha-D-glucosamine 1-phosphate + acetyl-CoA = N-acetyl-alpha-D-glucosamine 1-phosphate + CoA + H(+). The catalysed reaction is N-acetyl-alpha-D-glucosamine 1-phosphate + UTP + H(+) = UDP-N-acetyl-alpha-D-glucosamine + diphosphate. Its pathway is nucleotide-sugar biosynthesis; UDP-N-acetyl-alpha-D-glucosamine biosynthesis; N-acetyl-alpha-D-glucosamine 1-phosphate from alpha-D-glucosamine 6-phosphate (route II): step 2/2. The protein operates within nucleotide-sugar biosynthesis; UDP-N-acetyl-alpha-D-glucosamine biosynthesis; UDP-N-acetyl-alpha-D-glucosamine from N-acetyl-alpha-D-glucosamine 1-phosphate: step 1/1. It functions in the pathway bacterial outer membrane biogenesis; LPS lipid A biosynthesis. Functionally, catalyzes the last two sequential reactions in the de novo biosynthetic pathway for UDP-N-acetylglucosamine (UDP-GlcNAc). The C-terminal domain catalyzes the transfer of acetyl group from acetyl coenzyme A to glucosamine-1-phosphate (GlcN-1-P) to produce N-acetylglucosamine-1-phosphate (GlcNAc-1-P), which is converted into UDP-GlcNAc by the transfer of uridine 5-monophosphate (from uridine 5-triphosphate), a reaction catalyzed by the N-terminal domain. The sequence is that of Bifunctional protein GlmU from Rhodopseudomonas palustris (strain BisA53).